Consider the following 222-residue polypeptide: Charged multivesicular body protein 4a (222 aa).

Disordered regions lie at residues 1-21 and 180-211; these read MSGL…TPEE and VGDK…DEDE. Residues 1-116 are interaction with phosphoinosides; the sequence is MSGLGRLFGK…ELAAQSMKKA (116 aa). Positions 1–150 are intramolecular interaction with C-terminus; sequence MSGLGRLFGK…QISDAISRPM (150 aa). Coiled coils occupy residues 20-105 and 155-180; these read EEAI…VLRT and DVDE…LLNV. The tract at residues 151-222 is intramolecular interaction with N-terminus; sequence GFGDDVDEDE…ALKQLAEWVS (72 aa). Ser-196 carries the phosphoserine modification.

The protein belongs to the SNF7 family. As to quaternary structure, probable core component of the endosomal sorting required for transport complex III (ESCRT-III). ESCRT-III components are thought to multimerize to form a flat lattice on the perimeter membrane of the endosome. Several assembly forms of ESCRT-III may exist that interact and act sequentially. Self-associates; overexpression leads to the assembly of filaments that curve and associate to create circular rings. Interacts with CHMP2A. Interacts with CHMP3; the interaction requires the release of CHMP4A autoinhibition. Interacts with CHMP4B. Interacts with CHMP4C. Interacts with CHMP6. Interacts with VPS4A. Interacts with PDCD6IP; the interaction is direct. As to expression, widely expressed. Expressed at higher level in heart, kidney, liver and skeletal muscle. Also expressed in brain, placenta, lung and pancreas.

It is found in the cytoplasmic vesicle membrane. The protein localises to the late endosome membrane. In terms of biological role, probable core component of the endosomal sorting required for transport complex III (ESCRT-III) which is involved in multivesicular bodies (MVBs) formation and sorting of endosomal cargo proteins into MVBs. MVBs contain intraluminal vesicles (ILVs) that are generated by invagination and scission from the limiting membrane of the endosome and mostly are delivered to lysosomes enabling degradation of membrane proteins, such as stimulated growth factor receptors, lysosomal enzymes and lipids. The MVB pathway appears to require the sequential function of ESCRT-O, -I,-II and -III complexes. ESCRT-III proteins mostly dissociate from the invaginating membrane before the ILV is released. The ESCRT machinery also functions in topologically equivalent membrane fission events, such as the terminal stages of cytokinesis and the budding of enveloped viruses (HIV-1 and other lentiviruses). ESCRT-III proteins are believed to mediate the necessary vesicle extrusion and/or membrane fission activities, possibly in conjunction with the AAA ATPase VPS4. When overexpressed, membrane-assembled circular arrays of CHMP4A filaments can promote or stabilize negative curvature and outward budding. Via its interaction with PDCD6IP involved in HIV-1 p6- and p9-dependent virus release. CHMP4A/B/C are required for the exosomal release of SDCBP, CD63 and syndecan. This is Charged multivesicular body protein 4a (CHMP4A) from Homo sapiens (Human).